A 149-amino-acid chain; its full sequence is Urease accessory protein UreE (149 aa).

It belongs to the UreE family.

The protein resides in the cytoplasm. In terms of biological role, involved in urease metallocenter assembly. Binds nickel. Probably functions as a nickel donor during metallocenter assembly. This is Urease accessory protein UreE from Ruegeria pomeroyi (strain ATCC 700808 / DSM 15171 / DSS-3) (Silicibacter pomeroyi).